The sequence spans 450 residues: Tubulin alpha-3C chain (450 aa).

An MREC motif motif is present at residues 1 to 4 (MREC). GTP is bound at residue Gln11. The residue at position 40 (Lys40) is an N6-acetyllysine. Glu71, Ser140, Gly144, Thr145, Thr179, Asn206, and Asn228 together coordinate GTP. Glu71 contacts Mg(2+). Glu254 is a catalytic residue. At Tyr282 the chain carries 3'-nitrotyrosine. Ser439 carries the post-translational modification Phosphoserine. 3'-nitrotyrosine is present on Tyr450.

It belongs to the tubulin family. Dimer of alpha and beta chains. A typical microtubule is a hollow water-filled tube with an outer diameter of 25 nm and an inner diameter of 15 nM. Alpha-beta heterodimers associate head-to-tail to form protofilaments running lengthwise along the microtubule wall with the beta-tubulin subunit facing the microtubule plus end conferring a structural polarity. Microtubules usually have 13 protofilaments but different protofilament numbers can be found in some organisms and specialized cells. The cofactor is Mg(2+). Some glutamate residues at the C-terminus are polyglutamylated, resulting in polyglutamate chains on the gamma-carboxyl group. Polyglutamylation plays a key role in microtubule severing by spastin (SPAST). SPAST preferentially recognizes and acts on microtubules decorated with short polyglutamate tails: severing activity by SPAST increases as the number of glutamates per tubulin rises from one to eight, but decreases beyond this glutamylation threshold. Glutamylation is also involved in cilia motility. In terms of processing, some glutamate residues at the C-terminus are monoglycylated but not polyglycylated due to the absence of functional TTLL10 in human. Monoglycylation is mainly limited to tubulin incorporated into cilia and flagella axonemes, which is required for their stability and maintenance. Flagella glycylation controls sperm motility. Both polyglutamylation and monoglycylation can coexist on the same protein on adjacent residues, and lowering glycylation levels increases polyglutamylation, and reciprocally. Post-translationally, acetylation of alpha chains at Lys-40 is located inside the microtubule lumen. This modification has been correlated with increased microtubule stability, intracellular transport and ciliary assembly. Methylation of alpha chains at Lys-40 is found in mitotic microtubules and is required for normal mitosis and cytokinesis contributing to genomic stability. In terms of processing, nitration of Tyr-450 is irreversible and interferes with normal dynein intracellular distribution. Post-translationally, undergoes a tyrosination/detyrosination cycle, the cyclic removal and re-addition of a C-terminal tyrosine residue by the enzymes tubulin tyrosine carboxypeptidase (MATCAP1/KIAA0895L, VASH1 or VASH2) and tubulin tyrosine ligase (TTL), respectively. Tyrosination promotes microtubule interaction with CAP-Gly domain-containing proteins such as CLIP1, CLIP2 and DCTN1. Tyrosination regulates the initiation of dynein-dynactin motility via interaction with DCTN1, which brings the dynein-dynactin complex into contact with microtubules. In neurons, tyrosinated tubulins mediate the initiation of retrograde vesicle transport. In terms of processing, detyrosination is involved in metaphase plate congression by guiding chromosomes during mitosis: detyrosination promotes interaction with CENPE, promoting pole-proximal transport of chromosomes toward the equator. Detyrosination increases microtubules-dependent mechanotransduction in dystrophic cardiac and skeletal muscle. In cardiomyocytes, detyrosinated microtubules are required to resist to contractile compression during contraction: detyrosination promotes association with desmin (DES) at force-generating sarcomeres, leading to buckled microtubules and mechanical resistance to contraction. Expressed in testis.

The protein localises to the cytoplasm. It is found in the cytoskeleton. It catalyses the reaction GTP + H2O = GDP + phosphate + H(+). Its function is as follows. Tubulin is the major constituent of microtubules, a cylinder consisting of laterally associated linear protofilaments composed of alpha- and beta-tubulin heterodimers. Microtubules grow by the addition of GTP-tubulin dimers to the microtubule end, where a stabilizing cap forms. Below the cap, tubulin dimers are in GDP-bound state, owing to GTPase activity of alpha-tubulin. This is Tubulin alpha-3C chain (TUBA3C) from Homo sapiens (Human).